Here is a 1105-residue protein sequence, read N- to C-terminus: MSDNRPTYDTSSSDEEPSNHFHIQLPQRQLNLQEIRKQNHKKHEKPTIAKQTASNLAKAKKITTGSNHKFGNSINNNNNNANKHLGSSSAGTNRRSLISPTSSTHVSSDDDDDDDDNAAFYGDKLNDNKKLNVFADTKNNLSHFQFNADGIKPKSLHGQGDDSSDDDGNNLDEVEDETHSDFAVLNQNHPPQQYYETDSSDEDEEDDDEVPQTVHKTYSNASSGRSSRLSRKKSMSETTDTRAPIPPTGRRSTNSNHSRESSGRRSTSSGNINSGGGLKGILRKMSLVDSTPVDSTNQDISHSDTFLGRVLNFGTNQGLSGGGLAPGASRVIREEDEGEWNLDEERRVGFAAHENDRDAFEMQPLNYEDLSEEAKQLIQQHVPGAGASNLDHSQQSSAAPSTEITPSQSPNQHLLNEKSNNNENNQQSTTVESSSSTSSPGEDEELARRRASEERKKAENPFYTPNPDLFLRGTNADNQELHQAPNDFLHDMDGDYIAPPKQVQAGVLSSLLRLYQNPQEQKSASSLSRVSTGTSGTALSSFDDSYDSDDYKDSKSSSNVDLQHKLKSGIKGGSKAMFNKAANKLKHHSHTRTNTVETQGSSNSEEFSNDKDEFSNGYDDDNKMNANLPSFQNARPKMPKKKTTEPVQKLKKLRHKQRAERLRITVHIADILQRQRFIMNMCRALMLFGAPTHRLEEYMVMTSRVLEIDGQFIYFPGCMLVSFGDAATRTSEVHLVRCAQGINLSKLADTHKIYKAVIHDLIGVEDASKKLDDLLKSKSRYPPWLCVLFYGLGSLAVTPFAFEGGWLDLPISFGVGLCVGYLQFYVSSISNLYSSVFEVSAAIVVAFIARGIGSIKGGDLFCFSAIAQGSLAIILPGYIILCGSLELQSRNLVAGAVRMFYAVIYSLFLGFGITLGAALYGWIDHNATSANSCASGHAIDEKWRILFVPMFALCLGLINQARWSQVPIMIVIAGIGYIGSFFAGKHFSTVTEFTACIGAFIVGVLGNLYSRIWKGMAVSAMLPAIFVQVPSGIASKSSLISGLNTADQITNKSSSNNGGTVTNDASSLSFGATMVEVSIGISVGLFAAALIIYPFGKKRTGLFAL.

The span at 1 to 11 shows a compositional bias: polar residues; that stretch reads MSDNRPTYDTS. Disordered regions lie at residues 1–22, 36–55, 65–123, 151–278, 385–473, and 520–656; these read MSDN…NHFH, RKQN…TASN, GSNH…FYGD, IKPK…GGGL, AGAS…FLRG, and EQKS…LRHK. A compositionally biased stretch (low complexity) spans 67 to 82; it reads NHKFGNSINNNNNNAN. Residues 85 to 106 show a composition bias toward polar residues; the sequence is LGSSSAGTNRRSLISPTSSTHV. Positions 162 to 178 are enriched in acidic residues; the sequence is DSSDDDGNNLDEVEDET. The span at 185-197 shows a compositional bias: polar residues; sequence LNQNHPPQQYYET. Residues 198–210 are compositionally biased toward acidic residues; that stretch reads DSSDEDEEDDDEV. Residues 390 to 413 show a composition bias toward polar residues; sequence LDHSQQSSAAPSTEITPSQSPNQH. A compositionally biased stretch (low complexity) spans 417-439; sequence EKSNNNENNQQSTTVESSSSTSS. Basic and acidic residues predominate over residues 446–459; the sequence is LARRRASEERKKAE. Composition is skewed to polar residues over residues 520–539, 592–606, and 624–633; these read EQKS…GTAL, RTNT…NSEE, and MNANLPSFQN. The next 10 membrane-spanning stretches (helical) occupy residues 782–802, 809–829, 835–855, 860–880, 903–923, 938–958, 963–983, 986–1006, 1015–1035, and 1075–1095; these read PPWL…PFAF, LPIS…VSSI, SVFE…IGSI, LFCF…GYII, VIYS…YGWI, AIDE…LGLI, WSQV…SFFA, HFST…GVLG, GMAV…GIAS, and VEVS…IYPF.

It belongs to the ThrE exporter (TC 2.A.79) family.

The protein resides in the membrane. This is Pheromone-regulated membrane protein 10 (PRM10) from Candida albicans (strain SC5314 / ATCC MYA-2876) (Yeast).